A 216-amino-acid polypeptide reads, in one-letter code: Cytidylate kinase (216 aa).

7–15 (GPAASGKGT) serves as a coordination point for ATP.

It belongs to the cytidylate kinase family. Type 1 subfamily.

The protein resides in the cytoplasm. The catalysed reaction is CMP + ATP = CDP + ADP. It carries out the reaction dCMP + ATP = dCDP + ADP. This Methylocella silvestris (strain DSM 15510 / CIP 108128 / LMG 27833 / NCIMB 13906 / BL2) protein is Cytidylate kinase.